The following is a 353-amino-acid chain: Palmitoyltransferase SWF1 (353 aa).

Position 1 (M1) is a topological domain, lumenal. The helical transmembrane segment at 2-22 (LFTLIVCLTIISSLATFLLLF) threads the bilayer. Over 23–61 (GDSPSFRNTPIQKLRNSLLSISRDIFQFYHWLDEKLNGQ) the chain is Cytoplasmic. Residues 62–82 (LLKILNWLVPVGYVMVVTVCF) form a helical membrane-spanning segment. The Lumenal segment spans residues 83-100 (QQFLTHTLPMLSSPGLFR). A helical transmembrane segment spans residues 101–121 (LFTIYFSMVLIYASTILAAFS). Residues 122 to 190 (DPGRITTINL…NNCVGYYNYK (69 aa)) are Cytoplasmic-facing. One can recognise a DHHC domain in the interval 147–197 (KTCSTCHIAKPARSKHCSVCNQCFLLYDHHCVWINNCVGYYNYKWFMLFLI). C177 functions as the S-palmitoyl cysteine intermediate in the catalytic mechanism. The helical transmembrane segment at 191–211 (WFMLFLISNINMLGYGGWLCY) threads the bilayer. Residues 212 to 233 (WALTPVSWRKITSTNNANKVTG) are Lumenal-facing. Residues 234–254 (IFLILCSIFIVITTLFTFLHL) traverse the membrane as a helical segment. Residues 255–353 (RYIYLGVTTN…WNNLIERLKW (99 aa)) are Cytoplasmic-facing.

It belongs to the DHHC palmitoyltransferase family. SWF1 subfamily.

The protein localises to the endoplasmic reticulum membrane. The catalysed reaction is L-cysteinyl-[protein] + hexadecanoyl-CoA = S-hexadecanoyl-L-cysteinyl-[protein] + CoA. In terms of biological role, palmitoyltransferase that targets several endosomal SNAREs. Palmitoylates the SNAREs at cysteine residues close to the cytoplasmic end of their transmembrane domain. May have a role in the cellular quality control of transmembrane domain-containing proteins. This chain is Palmitoyltransferase SWF1 (SWF1), found in Candida albicans (strain SC5314 / ATCC MYA-2876) (Yeast).